A 558-amino-acid polypeptide reads, in one-letter code: Glucose-6-phosphate isomerase (558 aa).

Glu362 functions as the Proton donor in the catalytic mechanism. Residues His393 and Lys523 contribute to the active site.

Belongs to the GPI family.

It localises to the cytoplasm. The enzyme catalyses alpha-D-glucose 6-phosphate = beta-D-fructose 6-phosphate. It functions in the pathway carbohydrate degradation; glycolysis; D-glyceraldehyde 3-phosphate and glycerone phosphate from D-glucose: step 2/4. This chain is Glucose-6-phosphate isomerase (Pgi), found in Drosophila yakuba (Fruit fly).